The sequence spans 347 residues: Holliday junction branch migration complex subunit RuvB (347 aa).

The segment at 1–181 (MTRNSLLNPE…FGIPVRLQFY (181 aa)) is large ATPase domain (RuvB-L). ATP-binding residues include Leu20, Arg21, Gly62, Lys65, Thr66, Thr67, Arg171, Tyr181, and Arg218. Residue Thr66 participates in Mg(2+) binding. Residues 182 to 252 (SIEELRQVIT…IADEALNRLE (71 aa)) are small ATPAse domain (RuvB-S). A head domain (RuvB-H) region spans residues 255–347 (KLGLDLMDRR…SEIKNQPGLL (93 aa)). DNA is bound by residues Arg291, Arg310, and Arg315.

It belongs to the RuvB family. Homohexamer. Forms an RuvA(8)-RuvB(12)-Holliday junction (HJ) complex. HJ DNA is sandwiched between 2 RuvA tetramers; dsDNA enters through RuvA and exits via RuvB. An RuvB hexamer assembles on each DNA strand where it exits the tetramer. Each RuvB hexamer is contacted by two RuvA subunits (via domain III) on 2 adjacent RuvB subunits; this complex drives branch migration. In the full resolvosome a probable DNA-RuvA(4)-RuvB(12)-RuvC(2) complex forms which resolves the HJ.

The protein resides in the cytoplasm. The enzyme catalyses ATP + H2O = ADP + phosphate + H(+). Its function is as follows. The RuvA-RuvB-RuvC complex processes Holliday junction (HJ) DNA during genetic recombination and DNA repair, while the RuvA-RuvB complex plays an important role in the rescue of blocked DNA replication forks via replication fork reversal (RFR). RuvA specifically binds to HJ cruciform DNA, conferring on it an open structure. The RuvB hexamer acts as an ATP-dependent pump, pulling dsDNA into and through the RuvAB complex. RuvB forms 2 homohexamers on either side of HJ DNA bound by 1 or 2 RuvA tetramers; 4 subunits per hexamer contact DNA at a time. Coordinated motions by a converter formed by DNA-disengaged RuvB subunits stimulates ATP hydrolysis and nucleotide exchange. Immobilization of the converter enables RuvB to convert the ATP-contained energy into a lever motion, pulling 2 nucleotides of DNA out of the RuvA tetramer per ATP hydrolyzed, thus driving DNA branch migration. The RuvB motors rotate together with the DNA substrate, which together with the progressing nucleotide cycle form the mechanistic basis for DNA recombination by continuous HJ branch migration. Branch migration allows RuvC to scan DNA until it finds its consensus sequence, where it cleaves and resolves cruciform DNA. The polypeptide is Holliday junction branch migration complex subunit RuvB (Zymomonas mobilis subsp. mobilis (strain ATCC 31821 / ZM4 / CP4)).